The chain runs to 342 residues: Ferredoxin--NADP reductase (342 aa).

Residues C17, D36, Q44, Y49, V89, F124, D289, and T330 each coordinate FAD.

The protein belongs to the ferredoxin--NADP reductase type 2 family. As to quaternary structure, homodimer. FAD serves as cofactor.

The enzyme catalyses 2 reduced [2Fe-2S]-[ferredoxin] + NADP(+) + H(+) = 2 oxidized [2Fe-2S]-[ferredoxin] + NADPH. This chain is Ferredoxin--NADP reductase, found in Bradyrhizobium sp. (strain ORS 278).